A 248-amino-acid polypeptide reads, in one-letter code: MQIEQLQINEIDNLHQVSSVEVGQHLYWQIGNFQVHAQVLITSWVVVAILVALPATTTGNLQSIPTGTQNFIEYVLEFIRDLTRTQMGEEGYRPWVPFIGTMFLFIFASNWSGALLPWRVIQLPHGELAAPTNDINTTVALALLTSVAYFYAGLYKRGFSYFGKYIQPTPILLPINILEDFTKPLSLSFRLFGNILADELVVAVLVSLVPLIVPVPMMLLGLFTSGIQALIFATLAAAYIGESMEGHH.

Helical transmembrane passes span 96–116 (VPFI…GALL), 135–155 (INTT…AGLY), 200–220 (LVVA…MMLL), and 221–241 (GLFT…AYIG).

This sequence belongs to the ATPase A chain family. F-type ATPases have 2 components, CF(1) - the catalytic core - and CF(0) - the membrane proton channel. CF(1) has five subunits: alpha(3), beta(3), gamma(1), delta(1), epsilon(1). CF(0) has four main subunits: a, b, b' and c.

It localises to the plastid. The protein localises to the chloroplast thylakoid membrane. In terms of biological role, key component of the proton channel; it plays a direct role in the translocation of protons across the membrane. This Adiantum capillus-veneris (Maidenhair fern) protein is ATP synthase subunit a, chloroplastic.